The sequence spans 403 residues: Dual-specificity RNA methyltransferase RlmN (403 aa).

The Proton acceptor role is filled by Glu-126. The Radical SAM core domain occupies 132–375; the sequence is ETDRGTLCVS…VRTPRGRDIL (244 aa). The cysteines at positions 139 and 378 are disulfide-linked. [4Fe-4S] cluster-binding residues include Cys-146, Cys-150, and Cys-153. Residues 204-205, Ser-236, 258-260, and Asn-335 contribute to the S-adenosyl-L-methionine site; these read GE and SLH. The active-site S-methylcysteine intermediate is the Cys-378.

This sequence belongs to the radical SAM superfamily. RlmN family. It depends on [4Fe-4S] cluster as a cofactor.

The protein resides in the cytoplasm. The catalysed reaction is adenosine(2503) in 23S rRNA + 2 reduced [2Fe-2S]-[ferredoxin] + 2 S-adenosyl-L-methionine = 2-methyladenosine(2503) in 23S rRNA + 5'-deoxyadenosine + L-methionine + 2 oxidized [2Fe-2S]-[ferredoxin] + S-adenosyl-L-homocysteine. It catalyses the reaction adenosine(37) in tRNA + 2 reduced [2Fe-2S]-[ferredoxin] + 2 S-adenosyl-L-methionine = 2-methyladenosine(37) in tRNA + 5'-deoxyadenosine + L-methionine + 2 oxidized [2Fe-2S]-[ferredoxin] + S-adenosyl-L-homocysteine. Its function is as follows. Specifically methylates position 2 of adenine 2503 in 23S rRNA and position 2 of adenine 37 in tRNAs. m2A2503 modification seems to play a crucial role in the proofreading step occurring at the peptidyl transferase center and thus would serve to optimize ribosomal fidelity. The polypeptide is Dual-specificity RNA methyltransferase RlmN (Bradyrhizobium sp. (strain BTAi1 / ATCC BAA-1182)).